Reading from the N-terminus, the 467-residue chain is Uronate isomerase (467 aa).

Belongs to the metallo-dependent hydrolases superfamily. Uronate isomerase family.

The catalysed reaction is D-glucuronate = D-fructuronate. It catalyses the reaction aldehydo-D-galacturonate = keto-D-tagaturonate. It functions in the pathway carbohydrate metabolism; pentose and glucuronate interconversion. In Haemophilus influenzae (strain 86-028NP), this protein is Uronate isomerase.